Consider the following 205-residue polypeptide: ATP-dependent Clp protease proteolytic subunit (205 aa).

Catalysis depends on Ser109, which acts as the Nucleophile. His134 is a catalytic residue.

The protein belongs to the peptidase S14 family. Fourteen ClpP subunits assemble into 2 heptameric rings which stack back to back to give a disk-like structure with a central cavity, resembling the structure of eukaryotic proteasomes.

The protein resides in the cytoplasm. The enzyme catalyses Hydrolysis of proteins to small peptides in the presence of ATP and magnesium. alpha-casein is the usual test substrate. In the absence of ATP, only oligopeptides shorter than five residues are hydrolyzed (such as succinyl-Leu-Tyr-|-NHMec, and Leu-Tyr-Leu-|-Tyr-Trp, in which cleavage of the -Tyr-|-Leu- and -Tyr-|-Trp bonds also occurs).. In terms of biological role, cleaves peptides in various proteins in a process that requires ATP hydrolysis. Has a chymotrypsin-like activity. Plays a major role in the degradation of misfolded proteins. This Buchnera aphidicola subsp. Baizongia pistaciae (strain Bp) protein is ATP-dependent Clp protease proteolytic subunit.